The chain runs to 97 residues: Large ribosomal subunit protein bL27 (97 aa).

The propeptide occupies 1–12 (MLKMNLANLQLF). Residues 14-37 (HKKGGGSTSNGRDSQAKRLGAKAA) form a disordered region.

The protein belongs to the bacterial ribosomal protein bL27 family. Post-translationally, the N-terminus is cleaved by ribosomal processing cysteine protease Prp.

In Streptococcus gordonii (strain Challis / ATCC 35105 / BCRC 15272 / CH1 / DL1 / V288), this protein is Large ribosomal subunit protein bL27.